A 182-amino-acid chain; its full sequence is Unknown protein 1 (182 aa).

The polypeptide is Unknown protein 1 (Helianthus annuus (Common sunflower)).